A 464-amino-acid chain; its full sequence is MSRLVIVSNRVPVPDKGGIAPAGGLAVALKVALEEQGGGIWMGWSGKSSGEDEPAPLAQLQQGNITYALTDLTDTDVEEYYHGFANRVLWPICHYRLDLAEYGRKEMAGYFRVNRFFAHRLAPLVKPDDVIWVHDYPLIPLAAELRQMGLENRIGFFLHIPWPPADVLFTMPVHEEIMRGLSHYDVVGFQTDHDLENFASCLRREGIGDALGGGRLSAYGRIFKGGVYAIGIETAAFAEFAKKASTNSTVKKARESIERRSLIIGVDRLDYSKGLTQRIEAFERFILANPAQRGRVTYLQITPKSRSEVPEYEAMQRTVAEQAGRVNGALGAVDWVPMRYINRSVGRRVLAGLYRLGKVGLVTPLRDGKNLVAKEYVAAQDPDDPGVLVLSRFAGAARELQGALLVNPYDIEGTANAMARSLSMPLEERQERWTTMMDQLLEHDVSRWCRDFLNDLTASSDRCG.

Residue arginine 10 participates in D-glucose 6-phosphate binding. 23–24 provides a ligand contact to UDP-alpha-D-glucose; it reads GG. D-glucose 6-phosphate-binding residues include tyrosine 81 and aspartate 135. Residues arginine 268 and lysine 273 each coordinate UDP-alpha-D-glucose. Arginine 306 is a binding site for D-glucose 6-phosphate. 371–375 is a UDP-alpha-D-glucose binding site; the sequence is LVAKE.

This sequence belongs to the glycosyltransferase 20 family. In terms of assembly, homotetramer.

It catalyses the reaction D-glucose 6-phosphate + UDP-alpha-D-glucose = alpha,alpha-trehalose 6-phosphate + UDP + H(+). The protein operates within glycan biosynthesis; trehalose biosynthesis. Functionally, probably involved in the osmoprotection via the biosynthesis of trehalose. Catalyzes the transfer of glucose from UDP-alpha-D-glucose (UDP-Glc) to D-glucose 6-phosphate (Glc-6-P) to form trehalose-6-phosphate. Acts with retention of the anomeric configuration of the UDP-sugar donor. This is Trehalose-6-phosphate synthase from Sinorhizobium fredii (strain NBRC 101917 / NGR234).